The primary structure comprises 497 residues: MHEKSLTELRAALDAKQCSAVELAQTYLKRIEDRKALNAFVHVDAQQTLAQAQAADALIAAGNAGPLTGLPIAHKDVFVTRNWRSTAGSKMLENYTSPFDATVVDRLAQAGMVCVGKTNMDEFAMGSSNENSYFGPVQNPWDRKAVPGGSSGGSAAAVAARLAPAATGTDTGGSIRQPASFSGITGIKPTYGRVSRYGMIAFASSLDQGGPMAQTAADCALLLNAMGGFDERDSTSLTHDHEDYTRYLGQDWSGAGNARDKPLAGLRVGLPKEYFGAGLADDVRASIDAALKQYEALGATLVEVSLPKTELSIPVYYVIAPAEASSNLSRFDGVRYGHRAAEYRDLLDMYKKSRAEGFGPEVKRRILVGTYVLSHGYYDAYYLQAQKIRRIIAQDFQEAFRHCDVIMGPVAPSVAWDIGAKGDDPVQMYLADIYTLSVSLAGLPGMSVPCGFGAGANAQRPVGLQIIGNYFNEARMLQVADAFQRATDWHRMAPAGV.

Active-site charge relay system residues include K75 and S150. The Acyl-ester intermediate role is filled by S174.

Belongs to the amidase family. GatA subfamily. Heterotrimer of A, B and C subunits.

It catalyses the reaction L-glutamyl-tRNA(Gln) + L-glutamine + ATP + H2O = L-glutaminyl-tRNA(Gln) + L-glutamate + ADP + phosphate + H(+). Functionally, allows the formation of correctly charged Gln-tRNA(Gln) through the transamidation of misacylated Glu-tRNA(Gln) in organisms which lack glutaminyl-tRNA synthetase. The reaction takes place in the presence of glutamine and ATP through an activated gamma-phospho-Glu-tRNA(Gln). The protein is Glutamyl-tRNA(Gln) amidotransferase subunit A of Paraburkholderia phymatum (strain DSM 17167 / CIP 108236 / LMG 21445 / STM815) (Burkholderia phymatum).